The chain runs to 142 residues: Small heat shock protein IbpB (142 aa).

The 112-residue stretch at 25-136 (GQEPQGFPPY…QPQRIAIGTT (112 aa)) folds into the sHSP domain.

This sequence belongs to the small heat shock protein (HSP20) family. In terms of assembly, homodimer. Forms homomultimers of about 100-150 subunits at optimal growth temperatures. Conformation changes to oligomers at high temperatures or high ionic concentrations. The decrease in size of the multimers is accompanied by an increase in chaperone activity.

It is found in the cytoplasm. In terms of biological role, associates with aggregated proteins, together with IbpA, to stabilize and protect them from irreversible denaturation and extensive proteolysis during heat shock and oxidative stress. Aggregated proteins bound to the IbpAB complex are more efficiently refolded and reactivated by the ATP-dependent chaperone systems ClpB and DnaK/DnaJ/GrpE. Its activity is ATP-independent. The polypeptide is Small heat shock protein IbpB (Serratia proteamaculans (strain 568)).